Here is a 432-residue protein sequence, read N- to C-terminus: Pachytene checkpoint protein 2 homolog (432 aa).

Residue 179–186 participates in ATP binding; the sequence is GPPGTGKT.

Belongs to the AAA ATPase family. PCH2 subfamily.

Its function is as follows. Plays a key role in chromosome recombination and chromosome structure development during meiosis. Required at early steps in meiotic recombination that leads to non-crossovers pathways. Also needed for efficient completion of homologous synapsis by influencing crossover distribution along the chromosomes affecting both crossovers and non-crossovers pathways. This is Pachytene checkpoint protein 2 homolog (trip13) from Xenopus tropicalis (Western clawed frog).